Consider the following 694-residue polypeptide: Glycine--tRNA ligase beta subunit (694 aa).

The protein belongs to the class-II aminoacyl-tRNA synthetase family. In terms of assembly, tetramer of two alpha and two beta subunits.

It localises to the cytoplasm. The catalysed reaction is tRNA(Gly) + glycine + ATP = glycyl-tRNA(Gly) + AMP + diphosphate. This Lactiplantibacillus plantarum (strain ATCC BAA-793 / NCIMB 8826 / WCFS1) (Lactobacillus plantarum) protein is Glycine--tRNA ligase beta subunit.